The primary structure comprises 241 residues: Ashwin (241 aa).

3 disordered regions span residues 1–21 (MAAQ…SARS), 82–102 (KMME…SVTA), and 212–241 (KRSV…CTWP). The span at 11–21 (GGKEERVSARS) shows a compositional bias: basic and acidic residues.

Belongs to the ashwin family.

The protein localises to the nucleus. In Gallus gallus (Chicken), this protein is Ashwin.